The chain runs to 152 residues: Protein SprT-like (152 aa).

Residues 7–148 (QRLVEEVSLQ…GKCKGKLILI (142 aa)) form the SprT-like domain. His67 lines the Zn(2+) pocket. The active site involves Glu68. His71 is a Zn(2+) binding site.

Belongs to the SprT family. It depends on Zn(2+) as a cofactor.

It localises to the cytoplasm. The sequence is that of Protein SprT-like from Bacillus thuringiensis subsp. konkukian (strain 97-27).